Consider the following 379-residue polypeptide: UDP-4-amino-4-deoxy-L-arabinose--oxoglutarate aminotransferase (379 aa).

Lys182 carries the post-translational modification N6-(pyridoxal phosphate)lysine.

This sequence belongs to the DegT/DnrJ/EryC1 family. ArnB subfamily. Homodimer. Pyridoxal 5'-phosphate is required as a cofactor.

It carries out the reaction UDP-4-amino-4-deoxy-beta-L-arabinose + 2-oxoglutarate = UDP-beta-L-threo-pentopyranos-4-ulose + L-glutamate. The protein operates within nucleotide-sugar biosynthesis; UDP-4-deoxy-4-formamido-beta-L-arabinose biosynthesis; UDP-4-deoxy-4-formamido-beta-L-arabinose from UDP-alpha-D-glucuronate: step 2/3. It participates in bacterial outer membrane biogenesis; lipopolysaccharide biosynthesis. Catalyzes the conversion of UDP-4-keto-arabinose (UDP-Ara4O) to UDP-4-amino-4-deoxy-L-arabinose (UDP-L-Ara4N). The modified arabinose is attached to lipid A and is required for resistance to polymyxin and cationic antimicrobial peptides. This chain is UDP-4-amino-4-deoxy-L-arabinose--oxoglutarate aminotransferase, found in Escherichia coli O8 (strain IAI1).